A 508-amino-acid chain; its full sequence is MKEEVLGLPIDKIEKKIKEYDFSPRISNIGYVKHVGDGVAEVSLLNSAFIGEMVVFESGIQGMVLSLKEDSVGVILFGKDEYVKEGDVVYSTSKILQVPTGNGFLGRVIDPLGNPIDGGGLIFPEAYVPIDNEAPSIFDREPVKEPLYTGIRTIDALIPIGHGQRELILGDRQTGKTTIALDTIISQKNYGTICIYVAIAQKRTNIARIVQTLREYGALSNTIVIATFPDEPPALRYIAPMAGCAMGEYFMRQGERVLIVYDDLTKHANTYREVALLLRRVPGREAYPGDIFYLHAHLLERAAKLNKRLGGGALTALPIAETLSGEISTYIPTNLISITDGQIYLDTNLFNAGIRPAINVGLSVSRVGGSAQPKGMRQVAGRLRLDLAQYREYAMFLEFGTELDMATKKKIERGRRVEELLKQGAHEVQPIEEQIISFYLANGGFLDNYPVEKVKDVVIKYIAYLKLKYSSVLTFLREELQLSDQIIYQLHNIFQEFEKEVYANSTGS.

170–177 (GDRQTGKT) is a binding site for ATP.

The protein belongs to the ATPase alpha/beta chains family. In terms of assembly, F-type ATPases have 2 components, CF(1) - the catalytic core - and CF(0) - the membrane proton channel. CF(1) has five subunits: alpha(3), beta(3), gamma(1), delta(1), epsilon(1). CF(0) has three main subunits: a(1), b(2) and c(9-12). The alpha and beta chains form an alternating ring which encloses part of the gamma chain. CF(1) is attached to CF(0) by a central stalk formed by the gamma and epsilon chains, while a peripheral stalk is formed by the delta and b chains.

The protein resides in the cell inner membrane. The catalysed reaction is ATP + H2O + 4 H(+)(in) = ADP + phosphate + 5 H(+)(out). Its function is as follows. Produces ATP from ADP in the presence of a proton gradient across the membrane. The alpha chain is a regulatory subunit. The chain is ATP synthase subunit alpha from Dictyoglomus turgidum (strain DSM 6724 / Z-1310).